We begin with the raw amino-acid sequence, 298 residues long: Large ribosomal subunit protein uL18 (298 aa).

It belongs to the universal ribosomal protein uL18 family. In terms of assembly, component of the large ribosomal subunit. Mature ribosomes consist of a small (40S) and a large (60S) subunit. The 40S subunit contains about 32 different proteins and 1 molecule of RNA (18S). The 60S subunit contains 45 different proteins and 3 molecules of RNA (25S, 5.8S and 5S).

It is found in the cytoplasm. Functionally, component of the ribosome, a large ribonucleoprotein complex responsible for the synthesis of proteins in the cell. The small ribosomal subunit (SSU) binds messenger RNAs (mRNAs) and translates the encoded message by selecting cognate aminoacyl-transfer RNA (tRNA) molecules. The large subunit (LSU) contains the ribosomal catalytic site termed the peptidyl transferase center (PTC), which catalyzes the formation of peptide bonds, thereby polymerizing the amino acids delivered by tRNAs into a polypeptide chain. The nascent polypeptides leave the ribosome through a tunnel in the LSU and interact with protein factors that function in enzymatic processing, targeting, and the membrane insertion of nascent chains at the exit of the ribosomal tunnel. The chain is Large ribosomal subunit protein uL18 from Candida albicans (strain SC5314 / ATCC MYA-2876) (Yeast).